A 212-amino-acid chain; its full sequence is ATP-dependent dethiobiotin synthetase BioD (212 aa).

13-18 (GIGKTV) contributes to the ATP binding site. Thr17 provides a ligand contact to Mg(2+). Lys33 is an active-site residue. Residue Ser37 participates in substrate binding. Glu100 lines the Mg(2+) pocket. ATP contacts are provided by residues 100 to 103 (EGAG) and 184 to 186 (PLL).

It belongs to the dethiobiotin synthetase family. As to quaternary structure, homodimer. The cofactor is Mg(2+).

The protein resides in the cytoplasm. The enzyme catalyses (7R,8S)-7,8-diammoniononanoate + CO2 + ATP = (4R,5S)-dethiobiotin + ADP + phosphate + 3 H(+). The protein operates within cofactor biosynthesis; biotin biosynthesis; biotin from 7,8-diaminononanoate: step 1/2. Functionally, catalyzes a mechanistically unusual reaction, the ATP-dependent insertion of CO2 between the N7 and N8 nitrogen atoms of 7,8-diaminopelargonic acid (DAPA, also called 7,8-diammoniononanoate) to form a ureido ring. This chain is ATP-dependent dethiobiotin synthetase BioD, found in Brucella melitensis biotype 2 (strain ATCC 23457).